The sequence spans 40 residues: Auxin-responsive endogenous peptide 1 (40 aa).

A helical transmembrane segment spans residues 7 to 29 (LIYRLVVRCFLDYSICAPFYFYH).

Expressed in cotyledons, hypocotyls, roots, newly developing leaves and shoot apical meristem. Not detected in flowers, siliques or mature leaves.

It is found in the cytoplasm. Its subcellular location is the nucleus. The protein resides in the membrane. Negative regulator of the auxin response. The sequence is that of Auxin-responsive endogenous peptide 1 from Arabidopsis thaliana (Mouse-ear cress).